The primary structure comprises 386 residues: Putative acid--amine ligase YgiC (386 aa).

100-102 (RLD) lines the ATP pocket. Mg(2+) is bound by residues Asp-102, Glu-115, and Asn-117. Residues Lys-267, Lys-302, Gly-309, Gln-336, and 371–373 (LIT) each bind ATP.

This sequence belongs to the glutathionylspermidine synthase preATP-grasp family.

In terms of biological role, may be a ligase forming an amide bond. Shows ATPase activity. In Escherichia coli O157:H7, this protein is Putative acid--amine ligase YgiC (ygiC).